A 1297-amino-acid chain; its full sequence is DNA-directed RNA polymerase subunit beta' (1297 aa).

Zn(2+) contacts are provided by C60, C62, C75, and C78. D535, D537, and D539 together coordinate Mg(2+). Positions 883, 961, 968, and 971 each coordinate Zn(2+).

This sequence belongs to the RNA polymerase beta' chain family. In terms of assembly, the RNAP catalytic core consists of 2 alpha, 1 beta, 1 beta' and 1 omega subunit. When a sigma factor is associated with the core the holoenzyme is formed, which can initiate transcription. Requires Mg(2+) as cofactor. The cofactor is Zn(2+).

It carries out the reaction RNA(n) + a ribonucleoside 5'-triphosphate = RNA(n+1) + diphosphate. Its function is as follows. DNA-dependent RNA polymerase catalyzes the transcription of DNA into RNA using the four ribonucleoside triphosphates as substrates. The polypeptide is DNA-directed RNA polymerase subunit beta' (Salinispora arenicola (strain CNS-205)).